A 155-amino-acid chain; its full sequence is SsrA-binding protein (155 aa).

The protein belongs to the SmpB family.

The protein localises to the cytoplasm. Its function is as follows. Required for rescue of stalled ribosomes mediated by trans-translation. Binds to transfer-messenger RNA (tmRNA), required for stable association of tmRNA with ribosomes. tmRNA and SmpB together mimic tRNA shape, replacing the anticodon stem-loop with SmpB. tmRNA is encoded by the ssrA gene; the 2 termini fold to resemble tRNA(Ala) and it encodes a 'tag peptide', a short internal open reading frame. During trans-translation Ala-aminoacylated tmRNA acts like a tRNA, entering the A-site of stalled ribosomes, displacing the stalled mRNA. The ribosome then switches to translate the ORF on the tmRNA; the nascent peptide is terminated with the 'tag peptide' encoded by the tmRNA and targeted for degradation. The ribosome is freed to recommence translation, which seems to be the essential function of trans-translation. The polypeptide is SsrA-binding protein (Streptococcus equi subsp. zooepidemicus (strain H70)).